The chain runs to 182 residues: Isopentenyl-diphosphate Delta-isomerase (182 aa).

Mn(2+)-binding residues include histidine 25 and histidine 32. Residues 30–164 enclose the Nudix hydrolase domain; it reads LLHLAFSSWL…PWAFSPWMVM (135 aa). Residue cysteine 67 is part of the active site. Histidine 69 is a binding site for Mn(2+). Glutamate 87 contacts Mg(2+). Positions 114 and 116 each coordinate Mn(2+). Glutamate 116 is a catalytic residue.

Belongs to the IPP isomerase type 1 family. In terms of assembly, homodimer. It depends on Mg(2+) as a cofactor. Requires Mn(2+) as cofactor.

The protein resides in the cytoplasm. The catalysed reaction is isopentenyl diphosphate = dimethylallyl diphosphate. The protein operates within isoprenoid biosynthesis; dimethylallyl diphosphate biosynthesis; dimethylallyl diphosphate from isopentenyl diphosphate: step 1/1. In terms of biological role, catalyzes the 1,3-allylic rearrangement of the homoallylic substrate isopentenyl (IPP) to its highly electrophilic allylic isomer, dimethylallyl diphosphate (DMAPP). The protein is Isopentenyl-diphosphate Delta-isomerase of Escherichia coli O7:K1 (strain IAI39 / ExPEC).